The primary structure comprises 129 residues: Thioredoxin H7 (129 aa).

The region spanning 6 to 129 is the Thioredoxin domain; the sequence is SSVHDVHSSM…LVKKIEQHRV (124 aa). Active-site nucleophile residues include cysteine 55 and cysteine 58. A disulfide bridge connects residues cysteine 55 and cysteine 58.

The protein belongs to the thioredoxin family. Plant H-type subfamily.

It is found in the cytoplasm. Its function is as follows. Probable thiol-disulfide oxidoreductase that may be involved in the redox regulation of a number of cytosolic enzymes. The polypeptide is Thioredoxin H7 (TRX7) (Arabidopsis thaliana (Mouse-ear cress)).